We begin with the raw amino-acid sequence, 851 residues long: DNA mismatch repair protein MutS (851 aa).

ATP is bound at residue 614–621 (GPNMGGKS).

The protein belongs to the DNA mismatch repair MutS family.

Its function is as follows. This protein is involved in the repair of mismatches in DNA. It is possible that it carries out the mismatch recognition step. This protein has a weak ATPase activity. The sequence is that of DNA mismatch repair protein MutS from Serratia proteamaculans (strain 568).